The following is a 214-amino-acid chain: Ras-related protein RABH1c (214 aa).

16–23 lines the GTP pocket; that stretch reads GDQSVGKT. The short motif at 38-46 is the Effector region element; it reads YQPTIGIDF. GTP is bound by residues 64-68, 123-126, and 153-154; these read DTAGQ, NKTD, and SA. The tract at residues 194 to 214 is disordered; it reads TSNSSQGEQQGGAGGGGGCSC. Gly residues predominate over residues 202-214; it reads QQGGAGGGGGCSC. Residues Cys212 and Cys214 are each lipidated (S-geranylgeranyl cysteine). Cys214 is subject to Cysteine methyl ester.

It belongs to the small GTPase superfamily. Rab family. In terms of assembly, interacts with the C-terminus of GC5, but not with GC3.

It is found in the golgi apparatus membrane. Its subcellular location is the cytoplasm. It localises to the cytosol. In terms of biological role, protein transport. Regulator of membrane traffic from the Golgi apparatus towards the endoplasmic reticulum (ER). This chain is Ras-related protein RABH1c (RABH1C), found in Arabidopsis thaliana (Mouse-ear cress).